Reading from the N-terminus, the 446-residue chain is Chromosomal replication initiator protein DnaA (446 aa).

The domain I, interacts with DnaA modulators stretch occupies residues 1–72 (MKNISDLWNQ…ADTIYDLTGE (72 aa)). The interval 72–109 (EELSIKFVIPQNQNEEDFMPKSPIKKMSKEEPADFPQN) is domain II. Positions 110-326 (MLNPKYTFDT…GALIRVVAYS (217 aa)) are domain III, AAA+ region. Residues glycine 154, glycine 156, lysine 157, and threonine 158 each coordinate ATP. The domain IV, binds dsDNA stretch occupies residues 327 to 446 (SLINKDINAD…QIKEIKEQLR (120 aa)).

This sequence belongs to the DnaA family. As to quaternary structure, oligomerizes as a right-handed, spiral filament on DNA at oriC.

It is found in the cytoplasm. In terms of biological role, plays an essential role in the initiation and regulation of chromosomal replication. ATP-DnaA binds to the origin of replication (oriC) to initiate formation of the DNA replication initiation complex once per cell cycle. Binds the DnaA box (a 9 base pair repeat at the origin) and separates the double-stranded (ds)DNA. Forms a right-handed helical filament on oriC DNA; dsDNA binds to the exterior of the filament while single-stranded (ss)DNA is stabiized in the filament's interior. The ATP-DnaA-oriC complex binds and stabilizes one strand of the AT-rich DNA unwinding element (DUE), permitting loading of DNA polymerase. After initiation quickly degrades to an ADP-DnaA complex that is not apt for DNA replication. Binds acidic phospholipids. In Bacillus licheniformis (strain ATCC 14580 / DSM 13 / JCM 2505 / CCUG 7422 / NBRC 12200 / NCIMB 9375 / NCTC 10341 / NRRL NRS-1264 / Gibson 46), this protein is Chromosomal replication initiator protein DnaA.